The following is a 113-amino-acid chain: Large ribosomal subunit protein uL22 (113 aa).

It belongs to the universal ribosomal protein uL22 family. As to quaternary structure, part of the 50S ribosomal subunit.

In terms of biological role, this protein binds specifically to 23S rRNA; its binding is stimulated by other ribosomal proteins, e.g. L4, L17, and L20. It is important during the early stages of 50S assembly. It makes multiple contacts with different domains of the 23S rRNA in the assembled 50S subunit and ribosome. Its function is as follows. The globular domain of the protein is located near the polypeptide exit tunnel on the outside of the subunit, while an extended beta-hairpin is found that lines the wall of the exit tunnel in the center of the 70S ribosome. The chain is Large ribosomal subunit protein uL22 from Bacillus thuringiensis subsp. konkukian (strain 97-27).